We begin with the raw amino-acid sequence, 719 residues long: Glutamate--tRNA ligase, cytoplasmic (719 aa).

Ser93 contributes to the ATP binding site. The interval 176 to 205 (SGKPVAAPKSKDSQQAVKGDGQDKGKPEVD) is disordered. Residues 195-204 (DGQDKGKPEV) are compositionally biased toward basic and acidic residues. Position 217 to 219 (217 to 219 (RFA)) interacts with L-glutamate. The 'HIGH' region motif lies at 220–230 (PEPSGYLHIGH). His227 contacts ATP. Residues 393–397 (YDFAC) and Arg411 contribute to the L-glutamate site. ATP contacts are provided by residues Glu414 and 448–452 (LLSKR). A 'KMSKS' region motif is present at residues 448–452 (LLSKR).

Belongs to the class-I aminoacyl-tRNA synthetase family. Glutamate--tRNA ligase type 2 subfamily. As to quaternary structure, interacts with GLN2, COL4 and RPP13L4/ZAR1.

Its subcellular location is the cytoplasm. The protein resides in the cytosol. It catalyses the reaction tRNA(Glu) + L-glutamate + ATP = L-glutamyl-tRNA(Glu) + AMP + diphosphate. Catalyzes the attachment of glutamate to tRNA(Glu) in a two-step reaction: glutamate is first activated by ATP to form Glu-AMP and then transferred to the acceptor end of tRNA(Glu). The sequence is that of Glutamate--tRNA ligase, cytoplasmic from Arabidopsis thaliana (Mouse-ear cress).